A 213-amino-acid polypeptide reads, in one-letter code: Deoxyribose-phosphate aldolase (213 aa).

Asp-89 functions as the Proton donor/acceptor in the catalytic mechanism. Lys-151 (schiff-base intermediate with acetaldehyde) is an active-site residue. The Proton donor/acceptor role is filled by Lys-180.

The protein belongs to the DeoC/FbaB aldolase family. DeoC type 1 subfamily.

Its subcellular location is the cytoplasm. It catalyses the reaction 2-deoxy-D-ribose 5-phosphate = D-glyceraldehyde 3-phosphate + acetaldehyde. It participates in carbohydrate degradation; 2-deoxy-D-ribose 1-phosphate degradation; D-glyceraldehyde 3-phosphate and acetaldehyde from 2-deoxy-alpha-D-ribose 1-phosphate: step 2/2. Functionally, catalyzes a reversible aldol reaction between acetaldehyde and D-glyceraldehyde 3-phosphate to generate 2-deoxy-D-ribose 5-phosphate. This is Deoxyribose-phosphate aldolase from Finegoldia magna (strain ATCC 29328 / DSM 20472 / WAL 2508) (Peptostreptococcus magnus).